Reading from the N-terminus, the 234-residue chain is Ubiquitin thioesterase OTUB2 (234 aa).

The 192-residue stretch at threonine 40–alanine 231 folds into the OTU domain. Aspartate 48 is an active-site residue. Cysteine 51 acts as the Nucleophile in catalysis. Catalysis depends on residues histidine 205 and histidine 224.

This sequence belongs to the peptidase C65 family.

It catalyses the reaction Thiol-dependent hydrolysis of ester, thioester, amide, peptide and isopeptide bonds formed by the C-terminal Gly of ubiquitin (a 76-residue protein attached to proteins as an intracellular targeting signal).. Hydrolase that can remove conjugated ubiquitin from proteins in vitro and may therefore play an important regulatory role at the level of protein turnover by preventing degradation. Mediates deubiquitination of 'Lys-11'-,'Lys-48'- and 'Lys-63'-linked polyubiquitin chains, with a preference for 'Lys-63'-linked polyubiquitin chains. This Mus musculus (Mouse) protein is Ubiquitin thioesterase OTUB2 (Otub2).